We begin with the raw amino-acid sequence, 267 residues long: Phosphatidylserine decarboxylase proenzyme (267 aa).

Catalysis depends on charge relay system; for autoendoproteolytic cleavage activity residues Asp-78, His-132, and Ser-236. Ser-236 acts as the Schiff-base intermediate with substrate; via pyruvic acid; for decarboxylase activity in catalysis. Ser-236 carries the pyruvic acid (Ser); by autocatalysis modification.

The protein belongs to the phosphatidylserine decarboxylase family. PSD-B subfamily. Prokaryotic type I sub-subfamily. In terms of assembly, heterodimer of a large membrane-associated beta subunit and a small pyruvoyl-containing alpha subunit. Pyruvate is required as a cofactor. In terms of processing, is synthesized initially as an inactive proenzyme. Formation of the active enzyme involves a self-maturation process in which the active site pyruvoyl group is generated from an internal serine residue via an autocatalytic post-translational modification. Two non-identical subunits are generated from the proenzyme in this reaction, and the pyruvate is formed at the N-terminus of the alpha chain, which is derived from the carboxyl end of the proenzyme. The autoendoproteolytic cleavage occurs by a canonical serine protease mechanism, in which the side chain hydroxyl group of the serine supplies its oxygen atom to form the C-terminus of the beta chain, while the remainder of the serine residue undergoes an oxidative deamination to produce ammonia and the pyruvoyl prosthetic group on the alpha chain. During this reaction, the Ser that is part of the protease active site of the proenzyme becomes the pyruvoyl prosthetic group, which constitutes an essential element of the active site of the mature decarboxylase.

The protein localises to the cell membrane. It catalyses the reaction a 1,2-diacyl-sn-glycero-3-phospho-L-serine + H(+) = a 1,2-diacyl-sn-glycero-3-phosphoethanolamine + CO2. It functions in the pathway phospholipid metabolism; phosphatidylethanolamine biosynthesis; phosphatidylethanolamine from CDP-diacylglycerol: step 2/2. Functionally, catalyzes the formation of phosphatidylethanolamine (PtdEtn) from phosphatidylserine (PtdSer). This Helicobacter pylori (strain J99 / ATCC 700824) (Campylobacter pylori J99) protein is Phosphatidylserine decarboxylase proenzyme.